Reading from the N-terminus, the 293-residue chain is MPWIQLKIDTDNQHADTLSDLLMEEGSLSITLEDGKDTPIFEPTLGETPLWNHTVLTALFEADRDLSIVVDNLKLQPFLGADFSYKIEQVEDKDWEREWMDNFHPIKFGERLWICPSWREIPDPEAVNIILDPGLAFGTGTHPTTALCLEWLDSLNFDNKEVIDFGCGSGILAVAALKLGATKVTGIDIDYQAIDASKANAERNGVEDQLTLYLPEDQPENLKADILVANILAGPLRELAPLIAEKVKPGGQLALSGLLQEQALEVAEFYTQWFDMDEPAHKEEWSRLTGIRK.

The S-adenosyl-L-methionine site is built by threonine 145, glycine 166, aspartate 188, and asparagine 230.

It belongs to the methyltransferase superfamily. PrmA family.

The protein localises to the cytoplasm. It carries out the reaction L-lysyl-[protein] + 3 S-adenosyl-L-methionine = N(6),N(6),N(6)-trimethyl-L-lysyl-[protein] + 3 S-adenosyl-L-homocysteine + 3 H(+). Its function is as follows. Methylates ribosomal protein L11. This is Ribosomal protein L11 methyltransferase from Shewanella woodyi (strain ATCC 51908 / MS32).